An 84-amino-acid chain; its full sequence is RNA-binding protein SAHV_0542 (84 aa).

This sequence belongs to the eukaryotic ribosomal protein eL8 family.

The chain is RNA-binding protein SAHV_0542 from Staphylococcus aureus (strain Mu3 / ATCC 700698).